We begin with the raw amino-acid sequence, 140 residues long: NADPH-dependent 7-cyano-7-deazaguanine reductase (140 aa).

Cysteine 49 serves as the catalytic Thioimide intermediate. The Proton donor role is filled by aspartate 56. Substrate is bound by residues 71 to 73 and 90 to 91; these read IEL and HE.

The protein belongs to the GTP cyclohydrolase I family. QueF type 1 subfamily.

The protein localises to the cytoplasm. The catalysed reaction is 7-aminomethyl-7-carbaguanine + 2 NADP(+) = 7-cyano-7-deazaguanine + 2 NADPH + 3 H(+). It functions in the pathway tRNA modification; tRNA-queuosine biosynthesis. Its function is as follows. Catalyzes the NADPH-dependent reduction of 7-cyano-7-deazaguanine (preQ0) to 7-aminomethyl-7-deazaguanine (preQ1). This chain is NADPH-dependent 7-cyano-7-deazaguanine reductase, found in Prochlorococcus marinus (strain NATL2A).